A 2566-amino-acid polypeptide reads, in one-letter code: MTGSDSSMCDLEVKSSLSLTSHLHEYQRNPLFHINTTTLTTTTTINNHINTTSTNNYQQQNDTMYDNNNNNVDNDMKVKSSMNDCINDNTINDTHSTTVIHAENENPRRPIPLTNTSNLEGSTSNVGGNSNFQTMSGNTIPFLPISATNDGRYEWPPSMRYSSANTDRFIQGINTNTDNRQEDFRNQLTSNNNNNYNFKSNNTADNEINQTNHHNLPQFANEKLLDSVRSKNFNNTNISNKVECSSPDANMVAAVAFNAVRRWFTNSSTLTNSDNTMKSVWNENMRTGNSGTNSIGFMNQSNILPYASLNSRLQHPLLPPPLVLNSTVGNATTQNSTHNNYGMFMHRGHHSSGYVPNHTAPMLRGGKKRSHSQSSVNELFDISSLTRSSQGSLNIMQSMRGSHSMGPSAEGSYGHLSAASLGASPGASCDIRRTLSSNGNSSHTAPPAPFSERSPFWSPNSPHSSGSGFDNYQTSSHKSLPLPSTLQTYQQHSGYTSTSGSSGNRSTGCLNRAPFGHLAVLSSSNSLNKQIQQQSDSNSVSNCSIDVPKKLTTNSSNMILPSCRTLGLPTNSVTVSSSEITKNCNNNVLQSAMAFAAVAVAAAAASSTTSSITERENSSLLNKHVLENTLHRECRDHGLHQHPSSECESCSSTLTMGNNNNKLNESINSVYNNLVPSCFMKPPSSATIKSLATTTDNNNSNTNILSNDLSTDNRNKSLNKLPCYNNDADANDTCMDATNNENIQQGVLRKIIPSTPSHFQFSSKTYNQLTQNNSSNKPITAVNNGNDVNNGGNMSSSFTNPLHWPFESIPTPDWSHTWFNNNNNNNTNSTIRFQLNPNETIRRNGRVKIEQIDLNSTVLSKSEMSELLINENSNNNHHHLFGKGNNLLCPTLTKDLLKQHCALNNSDINSITNSLLNQQSSQRKQIDGTLNQMRGIKNFGRTCRITPVLEAITPGITTSISETSAVASSSTTAATPTTTGLFKQKSIEHSHKWQNQNVFSSRRNSTRDPSNNNNSGVGRCSVDEPDVDDDEELDDDGRVPQEGDPDFVETTCRWGDCTLQFDDQDELVKHLSTEHIAGNKKSFVCLWRECVRGTRPFKAQYMLVVHMRRHTGEKPHKCIFEGCIKRYSRLENLKTHLRSHTGEKPYQCEIPGCNKAFSNASDRAKHQNRTHSNEKPYTCKVDGCSKRYTDPSSLRKHVKTVHGAESLMKTSLQKKNSFGVNMLMKVYANKKHKGESWSDRPCGGSGFGGGHLFGNSNNNNSYPSQDKRSNGSMPGIRGRFGPRGMNDNGNIFHRGTYTDREQRPSSSSNPRDSCLACLSNPVHTTTIHPVDINAESIITEYPNQDLSKLKRFSIEESGRNTSHNMNWYLPETDNQNVHSSVLMMASSPAVYNTRNDYFPSFKCEHSIYPNYFSFARNMIHTEDTNQNDNNNNNLVLSWTSPTTPSPCDNLYLDQKINPSITLQPLSTTSNPVQSLSPSIDNPINSTGTKQKNLFSPVNESVTMIRNENCDQSKPVCVYGTSDDLAKDFKKSLKTEENNLIWNWKYSQPSIDGMNKDHCNKKHSILRFDDQDMKKPLPGYLSTSLESRSNTQLALNPNDQTVNQLTRSINNEHFNEMSNMSTTTINETYRENNLQFNFPLKWKVEDPLAYSKNMDNNSQTKNNNELNEENSPQSNQNECISNVPLLNNHYLEDVTEQKSQLCVIECPNRLRSMQDICSSNDIWDSESAAASSGIGSGVTTTTASDNSNPTAQNHHHQKQQPKHSHQHQNRTKSINSDNNYSNQDNVSTMDNDETFFNNENIKSDLGSIDRSSLFGTPRTDSNSTGCSYERTFNPQINYKNDNLIHSSCTCIQKRQKRDNSQSTCSYHRHYHDQLVDGNISSQLDSEQLSATSSQVSSGLGSMTSSNAGSGCNCTGTGLNNTNINVLDNVSGNVSSNICVNTLPRLVEGDNSSNLTNDYPNNSQVFNEDDNNISKMWRKYYKSYGYCSPCNNQPETFYPEVFNSETECYSNTPATVINGLSSTASPVPPSISTYHYHHNPHLHHQHQQRQSQHNLDLVMSNSNHYNDEMHFSPHSYVHSSSSNSSPFNSNRPHSVETFSHNNLTNNSLFDHRRYTHTSLSTTNNNHVNEMNNSINQINPKHPYNICLSSINNNNNQCDTNSNMILKRHSITDDLCHVNGTWFTNEYNGNDNHHYWTHPYNVNQLSIGNQIPNWLNKSVLTSSSPSSSSRLTSTSLTEAIRTHNSSDSLCVTSRFNDSINYYQEYTNCCQPTINSFQINQSSLSSTMSTKTSAKLQSKLSWTTDDNYSEYLCSNHSQNSYIQSNRLVNNNNSSNNDNLIEMDRNNRTNIQRNCSSELNCYTNFQNNTTQLENMDHINTNPLLISLASSQPFLMSSFNTTSISTTSEQTPYSSYHLTPTSNTVHQISQRGIEQMNKMNNLHSNNQLSTIASVTASETTTSTSTVSSYQNLKEREVYNFPVPNPLHTYINPFHSSNSLYSSFLQSVFEEPTFTSSSSSSSPSPSLLLSSSSSTHLGHFNQLFVNADPISNNLVVCNMSTMDTDCAPFHSSN.

3 disordered regions span residues 349-375 (HHSS…SQSS), 430-508 (DIRR…RSTG), and 985-1046 (KSIE…GDPD). Composition is skewed to polar residues over residues 434–444 (TLSSNGNSSHT) and 457–492 (WSPN…YQQH). Residues 493 to 508 (SGYTSTSGSSGNRSTG) are compositionally biased toward low complexity. Polar residues predominate over residues 993-1016 (WQNQNVFSSRRNSTRDPSNNNNSG). The span at 1023 to 1035 (DEPDVDDDEELDD) shows a compositional bias: acidic residues. The C2H2-type 1; degenerate zinc-finger motif lies at 1088-1110 (RECVRGTRPFKAQYMLVVHMRRH). 3 C2H2-type zinc fingers span residues 1116 to 1140 (HKCI…LRSH), 1146 to 1171 (YQCE…NRTH), and 1177 to 1202 (YTCK…KTVH). Disordered stretches follow at residues 1254 to 1313 (GNSN…PRDS), 1465 to 1491 (LSTT…TKQK), 1650 to 1677 (SKNM…NQNE), 1727 to 1791 (AAAS…MDND), and 2067 to 2091 (MHFS…NRPH). Low complexity-rich tracts occupy residues 1661 to 1677 (NNNE…NQNE) and 1727 to 1743 (AAAS…TTAS). Positions 1752–1769 (NHHHQKQQPKHSHQHQNR) are enriched in basic residues. Polar residues predominate over residues 1770-1791 (TKSINSDNNYSNQDNVSTMDND). The span at 2070 to 2090 (SPHSYVHSSSSNSSPFNSNRP) shows a compositional bias: low complexity.

This sequence belongs to the GLI C2H2-type zinc-finger protein family. Expressed in female-paired or unpaired males along the ventral surface in neurons and skin tegument cells. In virgin and mature females, expressed bilaterally along the edges of the body in neurons. In mature females, also expressed in skin tegument cells.

The protein localises to the nucleus. In terms of biological role, probable transcription factor which plays an essential role in males to trigger female sexual development by inducing NRPS expression in male. NRPS produces the pheromone beta-alanyl-tryptamine (BATT), which stimulates female sexual development. The polypeptide is Zinc finger protein GLI1 (Schistosoma mansoni (Blood fluke)).